Consider the following 300-residue polypeptide: Quinolinate synthase (300 aa).

Residues H21 and S38 each contribute to the iminosuccinate site. Residue C83 participates in [4Fe-4S] cluster binding. Iminosuccinate-binding positions include 109 to 111 and S126; that span reads YVN. Residue C170 participates in [4Fe-4S] cluster binding. Iminosuccinate-binding positions include 196–198 and T213; that span reads HPE. C256 contacts [4Fe-4S] cluster.

This sequence belongs to the quinolinate synthase family. Type 2 subfamily. As to quaternary structure, monomer. Homodimer. [4Fe-4S] cluster serves as cofactor.

The protein resides in the cytoplasm. The enzyme catalyses iminosuccinate + dihydroxyacetone phosphate = quinolinate + phosphate + 2 H2O + H(+). The protein operates within cofactor biosynthesis; NAD(+) biosynthesis; quinolinate from iminoaspartate: step 1/1. Catalyzes the condensation of iminoaspartate with dihydroxyacetone phosphate to form quinolinate. The chain is Quinolinate synthase from Pyrococcus horikoshii (strain ATCC 700860 / DSM 12428 / JCM 9974 / NBRC 100139 / OT-3).